A 430-amino-acid polypeptide reads, in one-letter code: Adenylosuccinate synthetase (430 aa).

GTP contacts are provided by residues 12–18 (GDEGKGK) and 40–42 (GHT). The Proton acceptor role is filled by Asp-13. The Mg(2+) site is built by Asp-13 and Gly-40. IMP is bound by residues 13–16 (DEGK), 38–41 (NAGH), Thr-130, Arg-144, Gln-224, Thr-239, and Arg-303. His-41 (proton donor) is an active-site residue. Substrate is bound at residue 299 to 305 (VVTGRPR). GTP is bound by residues Arg-305, 331 to 333 (KLD), and 413 to 415 (STS).

Belongs to the adenylosuccinate synthetase family. In terms of assembly, homodimer. The cofactor is Mg(2+).

It is found in the cytoplasm. The enzyme catalyses IMP + L-aspartate + GTP = N(6)-(1,2-dicarboxyethyl)-AMP + GDP + phosphate + 2 H(+). Its pathway is purine metabolism; AMP biosynthesis via de novo pathway; AMP from IMP: step 1/2. Functionally, plays an important role in the de novo pathway of purine nucleotide biosynthesis. Catalyzes the first committed step in the biosynthesis of AMP from IMP. The polypeptide is Adenylosuccinate synthetase (Azorhizobium caulinodans (strain ATCC 43989 / DSM 5975 / JCM 20966 / LMG 6465 / NBRC 14845 / NCIMB 13405 / ORS 571)).